A 337-amino-acid chain; its full sequence is Biotin synthase (337 aa).

Positions 58–283 (PEVEVEGIIS…RTILRFAGGR (226 aa)) constitute a Radical SAM core domain. [4Fe-4S] cluster is bound by residues Cys73, Cys77, and Cys80. 4 residues coordinate [2Fe-2S] cluster: Cys116, Cys149, Cys208, and Arg278.

Belongs to the radical SAM superfamily. Biotin synthase family. In terms of assembly, homodimer. It depends on [4Fe-4S] cluster as a cofactor. [2Fe-2S] cluster is required as a cofactor.

It catalyses the reaction (4R,5S)-dethiobiotin + (sulfur carrier)-SH + 2 reduced [2Fe-2S]-[ferredoxin] + 2 S-adenosyl-L-methionine = (sulfur carrier)-H + biotin + 2 5'-deoxyadenosine + 2 L-methionine + 2 oxidized [2Fe-2S]-[ferredoxin]. It participates in cofactor biosynthesis; biotin biosynthesis; biotin from 7,8-diaminononanoate: step 2/2. Functionally, catalyzes the conversion of dethiobiotin (DTB) to biotin by the insertion of a sulfur atom into dethiobiotin via a radical-based mechanism. This Rhodococcus jostii (strain RHA1) protein is Biotin synthase.